The following is a 55-amino-acid chain: ASSTWGGSYPACENNCRKQYDDCIKCQGKWAGKRGKCAAHCAVQTTSCNDKCKKH.

Pro-10 bears the Hydroxyproline mark. 4 cysteine pairs are disulfide-bonded: Cys-12-Cys-48, Cys-16-Cys-52, Cys-23-Cys-41, and Cys-26-Cys-37.

The protein belongs to the worm B-toxin family.

It is found in the secreted. Functionally, this toxin increases the excitability of nerves by delaying the inactivation of the voltage-gated sodium channel (Nav). Only acts on some crustacean. Neurotoxin B-II is less abundant, but 15-fold more toxic than neurotoxin B-VI. The polypeptide is Neurotoxin B-II (Cerebratulus lacteus (Milky ribbon worm)).